The primary structure comprises 197 residues: Segregation and condensation protein B (197 aa).

The protein belongs to the ScpB family. In terms of assembly, homodimer. Homodimerization may be required to stabilize the binding of ScpA to the Smc head domains. Component of a cohesin-like complex composed of ScpA, ScpB and the Smc homodimer, in which ScpA and ScpB bind to the head domain of Smc. The presence of the three proteins is required for the association of the complex with DNA.

Its subcellular location is the cytoplasm. Participates in chromosomal partition during cell division. May act via the formation of a condensin-like complex containing Smc and ScpA that pull DNA away from mid-cell into both cell halves. This Bacillus pumilus (strain SAFR-032) protein is Segregation and condensation protein B.